The primary structure comprises 198 residues: Small ribosomal subunit protein uS7 (198 aa).

The protein belongs to the universal ribosomal protein uS7 family. In terms of assembly, part of the 30S ribosomal subunit.

Its function is as follows. One of the primary rRNA binding proteins, it binds directly to 16S rRNA where it nucleates assembly of the head domain of the 30S subunit. Is located at the subunit interface close to the decoding center. This Nanoarchaeum equitans (strain Kin4-M) protein is Small ribosomal subunit protein uS7.